A 612-amino-acid polypeptide reads, in one-letter code: Dihydroxy-acid dehydratase (612 aa).

D81 contacts Mg(2+). Residue C122 coordinates [2Fe-2S] cluster. 2 residues coordinate Mg(2+): D123 and K124. Position 124 is an N6-carboxylysine (K124). C193 serves as a coordination point for [2Fe-2S] cluster. E489 is a Mg(2+) binding site. S515 (proton acceptor) is an active-site residue.

The protein belongs to the IlvD/Edd family. In terms of assembly, homodimer. It depends on [2Fe-2S] cluster as a cofactor. Requires Mg(2+) as cofactor.

It catalyses the reaction (2R)-2,3-dihydroxy-3-methylbutanoate = 3-methyl-2-oxobutanoate + H2O. The catalysed reaction is (2R,3R)-2,3-dihydroxy-3-methylpentanoate = (S)-3-methyl-2-oxopentanoate + H2O. It participates in amino-acid biosynthesis; L-isoleucine biosynthesis; L-isoleucine from 2-oxobutanoate: step 3/4. Its pathway is amino-acid biosynthesis; L-valine biosynthesis; L-valine from pyruvate: step 3/4. Functionally, functions in the biosynthesis of branched-chain amino acids. Catalyzes the dehydration of (2R,3R)-2,3-dihydroxy-3-methylpentanoate (2,3-dihydroxy-3-methylvalerate) into 2-oxo-3-methylpentanoate (2-oxo-3-methylvalerate) and of (2R)-2,3-dihydroxy-3-methylbutanoate (2,3-dihydroxyisovalerate) into 2-oxo-3-methylbutanoate (2-oxoisovalerate), the penultimate precursor to L-isoleucine and L-valine, respectively. In Xanthomonas euvesicatoria pv. vesicatoria (strain 85-10) (Xanthomonas campestris pv. vesicatoria), this protein is Dihydroxy-acid dehydratase.